We begin with the raw amino-acid sequence, 465 residues long: uncharacterized protein (465 aa).

Residues 13–71 form the TRAM domain; the sequence is GPRPGLRLELQAIDLDRDGHGLARWQGWVVVVPGLLPGERAKVQLQQRQKSRWLSRISE. [4Fe-4S] cluster is bound by residues Cys84, Cys90, Cys93, and Cys171. S-adenosyl-L-methionine-binding residues include Gln294, Tyr324, Glu345, and Asp391. The active-site Nucleophile is Cys418.

It belongs to the class I-like SAM-binding methyltransferase superfamily. RNA M5U methyltransferase family.

This is an uncharacterized protein from Parasynechococcus marenigrum (strain WH8102).